Consider the following 707-residue polypeptide: Elongation factor G (707 aa).

A tr-type G domain is found at 8-297 (ERVRNIGIAA…AVLDYLPSPL (290 aa)). Residues 17-24 (AHIDAGKT), 96-100 (DTPGH), and 150-153 (NKMD) contribute to the GTP site.

This sequence belongs to the TRAFAC class translation factor GTPase superfamily. Classic translation factor GTPase family. EF-G/EF-2 subfamily.

The protein resides in the cytoplasm. Functionally, catalyzes the GTP-dependent ribosomal translocation step during translation elongation. During this step, the ribosome changes from the pre-translocational (PRE) to the post-translocational (POST) state as the newly formed A-site-bound peptidyl-tRNA and P-site-bound deacylated tRNA move to the P and E sites, respectively. Catalyzes the coordinated movement of the two tRNA molecules, the mRNA and conformational changes in the ribosome. This chain is Elongation factor G, found in Gloeobacter violaceus (strain ATCC 29082 / PCC 7421).